The primary structure comprises 950 residues: Serine/threonine-protein kinase 10-A (950 aa).

Positions Trp-36–Val-294 constitute a Protein kinase domain. ATP-binding positions include Leu-42–Val-50 and Lys-65. Asp-157 acts as the Proton acceptor in catalysis. Residues Glu-319–Asp-331 are compositionally biased toward acidic residues. The segment at Glu-319–Ser-478 is disordered. Residues Glu-347–Gln-356 show a composition bias toward basic and acidic residues. The segment covering Ser-365 to Arg-382 has biased composition (polar residues). Residues Glu-416 to Ser-432 show a composition bias toward basic and acidic residues. Low complexity predominate over residues Ser-433–Ala-445. Positions Ser-452–Trp-463 are enriched in polar residues. A phosphoserine; by PLK1 mark is found at Ser-482, Ser-486, and Ser-490. Residues Ile-634–Lys-786 are a coiled coil.

It belongs to the protein kinase superfamily. STE Ser/Thr protein kinase family. STE20 subfamily. In terms of assembly, homodimer. Post-translationally, autophosphorylates. Phosphorylated by plk1/plx1, suggesting the existence of a feedback loop with plk1/plx1. activation of the protein.

It is found in the cell membrane. It catalyses the reaction L-seryl-[protein] + ATP = O-phospho-L-seryl-[protein] + ADP + H(+). The catalysed reaction is L-threonyl-[protein] + ATP = O-phospho-L-threonyl-[protein] + ADP + H(+). Its function is as follows. May act as a polo kinase kinase by mediating phosphorylation of plk1/plx1 and subsequent activation of plk1/plx1 during oocyte maturation. The polypeptide is Serine/threonine-protein kinase 10-A (stk10-a) (Xenopus laevis (African clawed frog)).